The chain runs to 745 residues: Cytoskeleton-associated protein 2-like (745 aa).

Disordered regions lie at residues 26–305 (KGKL…VNRV), 319–362 (PATE…LGPQ), 422–483 (FPPQ…TYKR), and 608–638 (EAVT…PCPS). Composition is skewed to polar residues over residues 67-89 (SKTT…ASQK) and 101-136 (GLTS…SRNP). The KEN box motif lies at 183-185 (KEN). The segment covering 192-202 (KPEKPDPELHS) has biased composition (basic and acidic residues). A Glycyl lysine isopeptide (Lys-Gly) (interchain with G-Cter in SUMO1); alternate cross-link involves residue lysine 195. Lysine 195 is covalently cross-linked (Glycyl lysine isopeptide (Lys-Gly) (interchain with G-Cter in SUMO2); alternate). Composition is skewed to polar residues over residues 205–216 (KPNTGSSNQTQK), 224–233 (LSKSSVTQTA), 242–253 (FIRNTQIRTQAV), and 284–301 (NKTQ…QDIT). Polar residues predominate over residues 427–442 (HFLNKTAPRTQASTAA). The segment covering 459 to 475 (KKPEGEDRRKQLEEWQK) has biased composition (basic and acidic residues). Over residues 608–624 (EAVTSDTSAAGTNTTSA) the composition is skewed to polar residues. Serine 745 is subject to Phosphoserine.

Belongs to the CKAP2 family. Ubiquitinated by the anaphase promoting complex/cyclosome (APC/C). In terms of tissue distribution, highly expressed in regions of active neurogenesis and neural stem/progenitor cells (NSPCs), both embryonic and adult, not detected in lung, liver, kidney, heart, and skeletal muscle.

The protein localises to the cytoplasm. The protein resides in the cytoskeleton. It is found in the spindle pole. Its function is as follows. Microtubule-associated protein required for mitotic spindle formation and cell-cycle progression in neural progenitor cells. The protein is Cytoskeleton-associated protein 2-like (Ckap2l) of Mus musculus (Mouse).